Reading from the N-terminus, the 299-residue chain is MKIVKRILLVLLSLFFTIVYSNAQTDNLTLKIENVLKAKNARIGVAIFNSNEKDTLKINNDFHFPMQSVMKFPIALAVLSEIDKGNLSFEQKIEITPQDLLPKTWSPIKEEFPNGTTLTIEQILNYTVSESDNIGCDILLKLIGGTDSVQKFLNANHFTDISIKANEEQMHKDWNTQYQNWATPTAMNKLLIDTYNNKNQLLSKKSYDFIWKIMRETTTGSNRLKGQLPKNTIVAHKTGTSGINNGIAAATNDVGVITLPNGQLIFISVFVAESKETSEINEKIISDIAKITWNYYLNK.

Residues methionine 1–alanine 23 form the signal peptide. Serine 68 (nucleophile; acyl-ester intermediate) is an active-site residue. Residues lysine 71, serine 131, and glutamate 167 each coordinate a beta-lactam. Glutamate 167 serves as the catalytic Proton acceptor.

Belongs to the class-A beta-lactamase family.

The catalysed reaction is a beta-lactam + H2O = a substituted beta-amino acid. Inhibited by the beta-lactamase-blocking agent clavulanic acid. Its function is as follows. Class A beta-lactamase which confers resistance to the beta-lactam antibiotics, including penicillins and cephalosporins, in E.coli strain JM109. Acts via hydrolysis of the beta-lactam ring. Has penicillin-, and cephalosporin-hydrolyzing activities. This chain is Beta-lactamase VEB-1, found in Pseudomonas aeruginosa.